We begin with the raw amino-acid sequence, 264 residues long: Thymidylate synthase (264 aa).

Arg21 contacts dUMP. His51 is a (6R)-5,10-methylene-5,6,7,8-tetrahydrofolate binding site. 126 to 127 provides a ligand contact to dUMP; the sequence is RR. The active-site Nucleophile is Cys146. Residues 166 to 169, Asn177, and 207 to 209 each bind dUMP; these read RSAD and HIY. Asp169 contacts (6R)-5,10-methylene-5,6,7,8-tetrahydrofolate. Ala263 provides a ligand contact to (6R)-5,10-methylene-5,6,7,8-tetrahydrofolate.

It belongs to the thymidylate synthase family. Bacterial-type ThyA subfamily. In terms of assembly, homodimer.

The protein resides in the cytoplasm. The catalysed reaction is dUMP + (6R)-5,10-methylene-5,6,7,8-tetrahydrofolate = 7,8-dihydrofolate + dTMP. The protein operates within pyrimidine metabolism; dTTP biosynthesis. Functionally, catalyzes the reductive methylation of 2'-deoxyuridine-5'-monophosphate (dUMP) to 2'-deoxythymidine-5'-monophosphate (dTMP) while utilizing 5,10-methylenetetrahydrofolate (mTHF) as the methyl donor and reductant in the reaction, yielding dihydrofolate (DHF) as a by-product. This enzymatic reaction provides an intracellular de novo source of dTMP, an essential precursor for DNA biosynthesis. This chain is Thymidylate synthase, found in Ruminiclostridium cellulolyticum (strain ATCC 35319 / DSM 5812 / JCM 6584 / H10) (Clostridium cellulolyticum).